Here is a 420-residue protein sequence, read N- to C-terminus: D-tagatose-1,6-bisphosphate aldolase subunit GatZ (420 aa).

It belongs to the GatZ/KbaZ family. GatZ subfamily. In terms of assembly, forms a complex with GatY.

It participates in carbohydrate metabolism; D-tagatose 6-phosphate degradation; D-glyceraldehyde 3-phosphate and glycerone phosphate from D-tagatose 6-phosphate: step 2/2. Functionally, component of the tagatose-1,6-bisphosphate aldolase GatYZ that is required for full activity and stability of the Y subunit. Could have a chaperone-like function for the proper and stable folding of GatY. When expressed alone, GatZ does not show any aldolase activity. Is involved in the catabolism of galactitol. This is D-tagatose-1,6-bisphosphate aldolase subunit GatZ from Shigella boydii serotype 18 (strain CDC 3083-94 / BS512).